Reading from the N-terminus, the 441-residue chain is Ribulose bisphosphate carboxylase large chain (441 aa).

N89 and T139 together coordinate substrate. Residue K141 is the Proton acceptor of the active site. Residue K143 coordinates substrate. Mg(2+)-binding residues include K167, D169, and E170. At K167 the chain carries N6-carboxylysine. H260 functions as the Proton acceptor in the catalytic mechanism. Residues R261, H293, and S345 each contribute to the substrate site.

It belongs to the RuBisCO large chain family. Type I subfamily. As to quaternary structure, heterohexadecamer of 8 large chains and 8 small chains; disulfide-linked. The disulfide link is formed within the large subunit homodimers. Mg(2+) serves as cofactor. In terms of processing, the disulfide bond which can form in the large chain dimeric partners within the hexadecamer appears to be associated with oxidative stress and protein turnover.

It localises to the plastid. Its subcellular location is the chloroplast. The catalysed reaction is 2 (2R)-3-phosphoglycerate + 2 H(+) = D-ribulose 1,5-bisphosphate + CO2 + H2O. It catalyses the reaction D-ribulose 1,5-bisphosphate + O2 = 2-phosphoglycolate + (2R)-3-phosphoglycerate + 2 H(+). Functionally, ruBisCO catalyzes two reactions: the carboxylation of D-ribulose 1,5-bisphosphate, the primary event in carbon dioxide fixation, as well as the oxidative fragmentation of the pentose substrate in the photorespiration process. Both reactions occur simultaneously and in competition at the same active site. This is Ribulose bisphosphate carboxylase large chain from Viola sororia (Woolly blue violet).